Here is a 344-residue protein sequence, read N- to C-terminus: Homoserine O-acetyltransferase (344 aa).

C142 functions as the Acyl-thioester intermediate in the catalytic mechanism. Residues K163 and S192 each coordinate substrate. H235 (proton acceptor) is an active-site residue. The active site involves E237. R249 is a substrate binding site.

Belongs to the MetA family.

The protein resides in the cytoplasm. The catalysed reaction is L-homoserine + acetyl-CoA = O-acetyl-L-homoserine + CoA. It functions in the pathway amino-acid biosynthesis; L-methionine biosynthesis via de novo pathway; O-acetyl-L-homoserine from L-homoserine: step 1/1. Its function is as follows. Transfers an acetyl group from acetyl-CoA to L-homoserine, forming acetyl-L-homoserine. In Bifidobacterium adolescentis (strain ATCC 15703 / DSM 20083 / NCTC 11814 / E194a), this protein is Homoserine O-acetyltransferase.